A 397-amino-acid polypeptide reads, in one-letter code: MIIKPRVRGFICVTTHPAGCAASVREQIAYVARRGPIERGPKKVLVIGASTGYGLAARIAAAFGVGAATLGVFFERAPADAKPGTAGWYNSAAFHDEAAARGLQATSVNGDAFSDEIKHKTIDAIRRDLGQVDLVVYSVAAPRRAHPKTGVTHQSTLKPIGHAVRLRGIDTDNEAIKETLLQPATPDEIADTVAVMGGEDWRMWIDALDAAGVLADGAKTTAFTYLGEQVTHDIYWNGSIGEAKKDLDRTVLALRDKLAARGGDARVSVLKAVVTQASSAIPMMPLYLSLLFKVMKARGTHEGCIEQVDGLLRDSLYGAQPHVDAEGRLRADRLELDPAVQARVLELWDQVTDDNLYTLTDFAGYKAEFLRLFGFGIDGVDYDAPVEPNVRIPNLIE.

NAD(+)-binding positions include 48 to 53, 74 to 75, 111 to 112, and 139 to 140; these read GASTGY, FE, DA, and VA. Y225 contributes to the substrate binding site. The active-site Proton donor is the Y235. NAD(+)-binding positions include K244 and 273–275; that span reads VVT.

The protein belongs to the TER reductase family. In terms of assembly, monomer.

The enzyme catalyses a 2,3-saturated acyl-[ACP] + NAD(+) = a (2E)-enoyl-[ACP] + NADH + H(+). Its pathway is lipid metabolism; fatty acid biosynthesis. Its function is as follows. Involved in the final reduction of the elongation cycle of fatty acid synthesis (FAS II). Catalyzes the reduction of a carbon-carbon double bond in an enoyl moiety that is covalently linked to an acyl carrier protein (ACP). This is Enoyl-[acyl-carrier-protein] reductase [NADH] from Burkholderia pseudomallei (strain K96243).